The chain runs to 215 residues: Chaperone protein TorD (215 aa).

This sequence belongs to the TorD/DmsD family. TorD subfamily.

The protein resides in the cytoplasm. In terms of biological role, involved in the biogenesis of TorA. Acts on TorA before the insertion of the molybdenum cofactor and, as a result, probably favors a conformation of the apoenzyme that is competent for acquiring the cofactor. The polypeptide is Chaperone protein TorD (Vibrio vulnificus (strain YJ016)).